A 219-amino-acid polypeptide reads, in one-letter code: 2-C-methyl-D-erythritol 4-phosphate cytidylyltransferase (219 aa).

Belongs to the IspD/TarI cytidylyltransferase family. IspD subfamily.

The catalysed reaction is 2-C-methyl-D-erythritol 4-phosphate + CTP + H(+) = 4-CDP-2-C-methyl-D-erythritol + diphosphate. It participates in isoprenoid biosynthesis; isopentenyl diphosphate biosynthesis via DXP pathway; isopentenyl diphosphate from 1-deoxy-D-xylulose 5-phosphate: step 2/6. Catalyzes the formation of 4-diphosphocytidyl-2-C-methyl-D-erythritol from CTP and 2-C-methyl-D-erythritol 4-phosphate (MEP). This is 2-C-methyl-D-erythritol 4-phosphate cytidylyltransferase from Bacteroides thetaiotaomicron (strain ATCC 29148 / DSM 2079 / JCM 5827 / CCUG 10774 / NCTC 10582 / VPI-5482 / E50).